Here is a 252-residue protein sequence, read N- to C-terminus: MLIGSHVSPTDPLAAAEAEGADVVQIFLGNPQSWKAPKPRDDAAALKAATLPIYVHAPYLINLASANNRVRIPSRKILQETCAAAADIGAAAVIVHGGHVADDNDIDKGFQRWRKALDRLETEVPVYLENTAGGDHAMARRFDTIARLWDVIGDTGIGFCLDTCHTWAAGEALTDAVDRIKAITGRIDLVHCNDSRDEAGSGRDRHANLGSGQIDPDLLVAAVKAAGAPVICETADQGRKDDIAFLRERTGS.

Positions 56, 96, 129, 162, 165, 191, 204, 206, and 233 each coordinate Zn(2+).

Belongs to the AP endonuclease 2 family. The cofactor is Zn(2+).

The catalysed reaction is Endonucleolytic cleavage to 5'-phosphooligonucleotide end-products.. Its function is as follows. Endonuclease IV plays a role in DNA repair. It cleaves phosphodiester bonds at apurinic or apyrimidinic (AP) sites, generating a 3'-hydroxyl group and a 5'-terminal sugar phosphate. In Mycobacterium tuberculosis (strain ATCC 25177 / H37Ra), this protein is Probable endonuclease 4.